The sequence spans 392 residues: MVLSTVNLTLIEELAAQALALEDLTPEQGLLLLQCDDPGGWEVIRQYGDRLRRKLVGETVTYVVNRNINFTNICEQHCNFCAFRRDDGQTGAYWLTDSEIFNKTKGAVAQGATEICLQGGLNPQAKINGSSLAYYVNLVETIKGQFPQLHLHGFSPQEIQFIARQDGLTYGEVLMALKFSGLDSLPGTAAEVLVDRVRRIICPEKIDSQTWLEIIGLAHRHGLPTTSTLMAGHVETPEEIITHLDRLRQRQQTSLAQGYAASITEFILLPFVGEKAPPSLRKRVGRDQPDLDQALQIMAIARLYLGKWIVNHQPSWVKLGLTGATTALEWGCNDLGGTLMEEHITTMAGAKGGTCLTATQLQNAIISTGRPYQQRTTLYEHLNANLNKIGLK.

The region spanning Val-60–Lys-307 is the Radical SAM core domain. [4Fe-4S] cluster-binding residues include Cys-74, Cys-78, and Cys-81.

It belongs to the radical SAM superfamily. CofH family. In terms of assembly, consists of two subunits, CofG and CofH. The cofactor is [4Fe-4S] cluster.

The catalysed reaction is 5-amino-6-(D-ribitylamino)uracil + L-tyrosine + S-adenosyl-L-methionine = 5-amino-5-(4-hydroxybenzyl)-6-(D-ribitylimino)-5,6-dihydrouracil + 2-iminoacetate + 5'-deoxyadenosine + L-methionine + H(+). The protein operates within cofactor biosynthesis; coenzyme F0 biosynthesis. Catalyzes the radical-mediated synthesis of 5-amino-5-(4-hydroxybenzyl)-6-(D-ribitylimino)-5,6-dihydrouracil from 5-amino-6-(D-ribitylamino)uracil and L-tyrosine. This is 5-amino-6-(D-ribitylamino)uracil--L-tyrosine 4-hydroxyphenyl transferase from Synechocystis sp. (strain ATCC 27184 / PCC 6803 / Kazusa).